The sequence spans 236 residues: uncharacterized protein (236 aa).

The tract at residues 186–236 (HGRGDTRNLNDITGLGHERERDRENTHYEKKPKLDSDSEVDIRSFRQDMDL) is disordered. Residues 201–236 (GHERERDRENTHYEKKPKLDSDSEVDIRSFRQDMDL) show a composition bias toward basic and acidic residues. S221 is modified (phosphoserine).

This is an uncharacterized protein from Saccharomyces cerevisiae (strain ATCC 204508 / S288c) (Baker's yeast).